The following is a 597-amino-acid chain: Aspartate--tRNA(Asp/Asn) ligase (597 aa).

Glu-182 is an L-aspartate binding site. Residues 206-209 are aspartate; it reads QLFK. Arg-228 provides a ligand contact to L-aspartate. ATP is bound by residues 228–230 and Gln-237; that span reads RDE. His-455 is a binding site for L-aspartate. Glu-489 contacts ATP. An L-aspartate-binding site is contributed by Arg-496. Residue 541-544 coordinates ATP; sequence GFDR.

This sequence belongs to the class-II aminoacyl-tRNA synthetase family. Type 1 subfamily. In terms of assembly, homodimer.

Its subcellular location is the cytoplasm. The catalysed reaction is tRNA(Asx) + L-aspartate + ATP = L-aspartyl-tRNA(Asx) + AMP + diphosphate. Aspartyl-tRNA synthetase with relaxed tRNA specificity since it is able to aspartylate not only its cognate tRNA(Asp) but also tRNA(Asn). Reaction proceeds in two steps: L-aspartate is first activated by ATP to form Asp-AMP and then transferred to the acceptor end of tRNA(Asp/Asn). The chain is Aspartate--tRNA(Asp/Asn) ligase from Desulfosudis oleivorans (strain DSM 6200 / JCM 39069 / Hxd3) (Desulfococcus oleovorans).